The following is a 261-amino-acid chain: Probable membrane transporter protein PD_1894 (261 aa).

8 helical membrane-spanning segments follow: residues 6 to 26 (LIVT…LGGG), 45 to 64 (HIAI…ANLI), 78 to 98 (VIFA…GMLI), 99 to 119 (DGQR…LLML), 150 to 170 (AASG…LIFA), 175 to 195 (TINA…ITTL), 205 to 225 (WTIA…GTLL), and 239 to 259 (VFGL…WASL).

It belongs to the 4-toluene sulfonate uptake permease (TSUP) (TC 2.A.102) family.

The protein resides in the cell membrane. The sequence is that of Probable membrane transporter protein PD_1894 from Xylella fastidiosa (strain Temecula1 / ATCC 700964).